The primary structure comprises 208 residues: ATP-dependent Clp protease proteolytic subunit (208 aa).

The active-site Nucleophile is the Ser-101. The active site involves His-126.

This sequence belongs to the peptidase S14 family. In terms of assembly, component of the chloroplastic Clp protease core complex.

The protein resides in the plastid. Its subcellular location is the chloroplast stroma. The enzyme catalyses Hydrolysis of proteins to small peptides in the presence of ATP and magnesium. alpha-casein is the usual test substrate. In the absence of ATP, only oligopeptides shorter than five residues are hydrolyzed (such as succinyl-Leu-Tyr-|-NHMec, and Leu-Tyr-Leu-|-Tyr-Trp, in which cleavage of the -Tyr-|-Leu- and -Tyr-|-Trp bonds also occurs).. In terms of biological role, cleaves peptides in various proteins in a process that requires ATP hydrolysis. Has a chymotrypsin-like activity. Plays a major role in the degradation of misfolded proteins. This is ATP-dependent Clp protease proteolytic subunit from Nephroselmis olivacea (Green alga).